We begin with the raw amino-acid sequence, 493 residues long: MFKFALTLTLCLAGSLSLAQHNPHWWGNRNTIVHLFEWKWSDIAQECESFLGPRGFAGVQVSPVNENIISAGRPWWERYQPISYKLTTRSGNEEEFGDMVRRCNDVGVRIYVDVLLNHMSGDFDGVAVGTAGTEAEPRKKSFPGVPYTAQDFHPTCEITDWNDRFQVQQCELVGLKDLDQSSDWVRSKLIEFLDHLIELGVAGFRVDAAKHMASEDLEYIYSSLSNLNIDHGFPHNSRPFIFQEVIDHGHETVSRDEYKELGAVTEFRFSEEIGNAFRGNNALKWLQSWGTGWGFLPSGQALTFVDNHDNQRDAGAVLNYKSPKQYKMATAFHLAYPYGISRVMSSFAFDDHDTPPPQDAQERIISPEFDEDGACVNGWICEHRWRQIYAMVGFKNAVRDTEITGWWDNGDNQISFCRGNKGFLAINNNQYDLSQDLNTCLPTGTYCDVISGSLIDGSCTGKSVTVNENGYGYIHIGSDDFDGVLALHVDAKV.

The first 19 residues, 1–19, serve as a signal peptide directing secretion; the sequence is MFKFALTLTLCLAGSLSLA. At Gln20 the chain carries Pyrrolidone carboxylic acid. A disulfide bond links Cys47 and Cys103. Ca(2+) contacts are provided by Asn117, Gln168, and Asp177. Cys156 and Cys170 are joined by a disulfide. Residue Arg205 participates in chloride binding. Asp207 (nucleophile) is an active-site residue. His211 serves as a coordination point for Ca(2+). Glu244 (proton donor) is an active-site residue. Asn307 and Arg342 together coordinate chloride. Intrachain disulfides connect Cys375–Cys381, Cys417–Cys440, and Cys447–Cys459.

It belongs to the glycosyl hydrolase 13 family. As to quaternary structure, monomer. Ca(2+) is required as a cofactor. Requires chloride as cofactor.

The protein resides in the secreted. It catalyses the reaction Endohydrolysis of (1-&gt;4)-alpha-D-glucosidic linkages in polysaccharides containing three or more (1-&gt;4)-alpha-linked D-glucose units.. The protein is Alpha-amylase-related protein (Amyrel) of Drosophila simulans (Fruit fly).